A 100-amino-acid chain; its full sequence is Large ribosomal subunit protein uL23 (100 aa).

Belongs to the universal ribosomal protein uL23 family. Part of the 50S ribosomal subunit. Contacts protein L29, and trigger factor when it is bound to the ribosome.

In terms of biological role, one of the early assembly proteins it binds 23S rRNA. One of the proteins that surrounds the polypeptide exit tunnel on the outside of the ribosome. Forms the main docking site for trigger factor binding to the ribosome. This chain is Large ribosomal subunit protein uL23, found in Prochlorococcus marinus (strain MIT 9313).